The primary structure comprises 579 residues: uncharacterized protein (579 aa).

Belongs to the UbiD family.

This is an uncharacterized protein from Chlamydia muridarum (strain MoPn / Nigg).